The following is a 404-amino-acid chain: Cysteine desulfurase IscS (404 aa).

Pyridoxal 5'-phosphate contacts are provided by residues 75 to 76 (AT), N155, Q183, and 203 to 205 (SAH). At K206 the chain carries N6-(pyridoxal phosphate)lysine. T243 provides a ligand contact to pyridoxal 5'-phosphate. C328 acts as the Cysteine persulfide intermediate in catalysis. C328 is a [2Fe-2S] cluster binding site.

This sequence belongs to the class-V pyridoxal-phosphate-dependent aminotransferase family. NifS/IscS subfamily. As to quaternary structure, homodimer. Forms a heterotetramer with IscU, interacts with other sulfur acceptors. Requires pyridoxal 5'-phosphate as cofactor.

It is found in the cytoplasm. The catalysed reaction is (sulfur carrier)-H + L-cysteine = (sulfur carrier)-SH + L-alanine. It functions in the pathway cofactor biosynthesis; iron-sulfur cluster biosynthesis. Master enzyme that delivers sulfur to a number of partners involved in Fe-S cluster assembly, tRNA modification or cofactor biosynthesis. Catalyzes the removal of elemental sulfur atoms from cysteine to produce alanine. Functions as a sulfur delivery protein for Fe-S cluster synthesis onto IscU, an Fe-S scaffold assembly protein, as well as other S acceptor proteins. This chain is Cysteine desulfurase IscS, found in Buchnera aphidicola subsp. Schizaphis graminum (strain Sg).